The primary structure comprises 231 residues: Large ribosomal subunit protein uL1 (231 aa).

The protein belongs to the universal ribosomal protein uL1 family. As to quaternary structure, part of the 50S ribosomal subunit.

Binds directly to 23S rRNA. The L1 stalk is quite mobile in the ribosome, and is involved in E site tRNA release. In terms of biological role, protein L1 is also a translational repressor protein, it controls the translation of the L11 operon by binding to its mRNA. This Azotobacter vinelandii (strain DJ / ATCC BAA-1303) protein is Large ribosomal subunit protein uL1.